The sequence spans 476 residues: Glycogen synthase (476 aa).

Position 15 (K15) interacts with ADP-alpha-D-glucose.

Belongs to the glycosyltransferase 1 family. Bacterial/plant glycogen synthase subfamily.

The enzyme catalyses [(1-&gt;4)-alpha-D-glucosyl](n) + ADP-alpha-D-glucose = [(1-&gt;4)-alpha-D-glucosyl](n+1) + ADP + H(+). It participates in glycan biosynthesis; glycogen biosynthesis. In terms of biological role, synthesizes alpha-1,4-glucan chains using ADP-glucose. This chain is Glycogen synthase, found in Haemophilus influenzae (strain PittGG).